A 508-amino-acid chain; its full sequence is Steroid 17-alpha-hydroxylase/17,20 lyase (508 aa).

N202 contributes to the substrate binding site. A heme-binding site is contributed by C442.

The protein belongs to the cytochrome P450 family. Heme serves as cofactor.

It localises to the endoplasmic reticulum membrane. The protein localises to the microsome membrane. It catalyses the reaction a C21-steroid + reduced [NADPH--hemoprotein reductase] + O2 = a 17alpha-hydroxy-C21-steroid + oxidized [NADPH--hemoprotein reductase] + H2O + H(+). The enzyme catalyses progesterone + reduced [NADPH--hemoprotein reductase] + O2 = 17alpha-hydroxyprogesterone + oxidized [NADPH--hemoprotein reductase] + H2O + H(+). It carries out the reaction pregnenolone + reduced [NADPH--hemoprotein reductase] + O2 = 17alpha-hydroxypregnenolone + oxidized [NADPH--hemoprotein reductase] + H2O + H(+). The catalysed reaction is 17alpha-hydroxyprogesterone + reduced [NADPH--hemoprotein reductase] + O2 = androst-4-ene-3,17-dione + acetate + oxidized [NADPH--hemoprotein reductase] + H2O + 2 H(+). It catalyses the reaction 17alpha-hydroxyprogesterone + reduced [NADPH--hemoprotein reductase] + O2 = 16alpha,17alpha-dihydroxyprogesterone + oxidized [NADPH--hemoprotein reductase] + H2O + H(+). The enzyme catalyses 16alpha,17alpha-dihydroxyprogesterone + reduced [NADPH--hemoprotein reductase] + O2 = 6beta,16alpha,17alpha-trihydroxyprogesterone + oxidized [NADPH--hemoprotein reductase] + H2O + H(+). It carries out the reaction 17alpha-hydroxypregnenolone + reduced [NADPH--hemoprotein reductase] + O2 = 3beta-hydroxyandrost-5-en-17-one + acetate + oxidized [NADPH--hemoprotein reductase] + H2O + 2 H(+). The catalysed reaction is 16alpha,17alpha-dihydroxypregnenolone + reduced [NADPH--hemoprotein reductase] + O2 = 3beta,16alpha-dihydroxy-androst-5-en-17-one + acetate + oxidized [NADPH--hemoprotein reductase] + H2O + 2 H(+). It catalyses the reaction 3beta-hydroxyandrost-5-en-17-one + reduced [NADPH--hemoprotein reductase] + O2 = 3beta,16alpha-dihydroxy-androst-5-en-17-one + oxidized [NADPH--hemoprotein reductase] + H2O + H(+). The enzyme catalyses androst-4-ene-3,17-dione + reduced [NADPH--hemoprotein reductase] + O2 = 16alpha-hydroxyandrost-4-ene-3,17-dione + oxidized [NADPH--hemoprotein reductase] + H2O + H(+). Its pathway is steroid hormone biosynthesis. It participates in steroid biosynthesis; glucocorticoid biosynthesis. Its activity is regulated as follows. Regulated predominantly by intracellular cAMP levels. The 17,20-lyase activity is stimulated by cytochrome b5, which acts as an allosteric effector increasing the Vmax of the lyase activity. Functionally, a cytochrome P450 monooxygenase involved in corticoid and androgen biosynthesis. Catalyzes 17-alpha hydroxylation of C21 steroids, which is common for both pathways. A second oxidative step, required only for androgen synthesis, involves an acyl-carbon cleavage. The 17-alpha hydroxy intermediates, as part of adrenal glucocorticoids biosynthesis pathway, are precursors of cortisol. Hydroxylates steroid hormones, pregnenolone and progesterone to form 17-alpha hydroxy metabolites, followed by the cleavage of the C17-C20 bond to form C19 steroids, dehydroepiandrosterone (DHEA) and androstenedione. Has 16-alpha hydroxylase activity. Catalyzes 16-alpha hydroxylation of 17-alpha hydroxy pregnenolone, followed by the cleavage of the C17-C20 bond to form 16-alpha-hydroxy DHEA. Also 16-alpha hydroxylates androgens, relevant for estriol synthesis. Mechanistically, uses molecular oxygen inserting one oxygen atom into a substrate, and reducing the second into a water molecule, with two electrons provided by NADPH via cytochrome P450 reductase (CPR; NADPH-ferrihemoprotein reductase). The protein is Steroid 17-alpha-hydroxylase/17,20 lyase (CYP17A1) of Macaca fascicularis (Crab-eating macaque).